Consider the following 130-residue polypeptide: Serum amyloid A-4 protein (130 aa).

A signal peptide spans 1-18; that stretch reads MRLFTGIVFCSLVMGVTS. An N-linked (GlcNAc...) asparagine; partial glycan is attached at Asn-94. The interval 101-130 is disordered; that stretch reads DSKSNEKAEEWGRSGKDPDRFRPDGLPKKY.

The protein belongs to the SAA family. In terms of assembly, apolipoprotein of the HDL complex. Expressed by the liver; secreted in plasma.

It localises to the secreted. Functionally, major acute phase reactant. The polypeptide is Serum amyloid A-4 protein (Homo sapiens (Human)).